Reading from the N-terminus, the 276-residue chain is Aquaporin-6 (276 aa).

Residues 1 to 22 (MEPGLCNRAYLLVGGLWTAISK) are Cytoplasmic-facing. The chain crosses the membrane as a helical span at residues 23 to 43 (ALFAEFLATGLYVFFGVGSVL). The Extracellular portion of the chain corresponds to 44 to 51 (PWPVALPS). The chain crosses the membrane as a helical span at residues 52 to 70 (VLQVAITFNLATATAVQIS). Residues 71–75 (WKTSG) are Cytoplasmic-facing. Positions 76 to 85 (AHANPAVTLA) form an intramembrane region, discontinuously helical. An NPA 1 motif is present at residues 79 to 81 (NPA). The Cytoplasmic portion of the chain corresponds to 86–96 (YLVGSHISLPR). The helical transmembrane segment at 97–118 (AVAYIAAQLAGATVGAALLYGV) threads the bilayer. Residues 119–138 (TPGGVRETLGVNVVHNSTST) are Extracellular-facing. Asn134 is a glycosylation site (N-linked (GlcNAc...) asparagine). A helical membrane pass occupies residues 139 to 159 (GQAVAVELVLTLQLVLCVFAS). The Cytoplasmic portion of the chain corresponds to 160–165 (MDSRQT). A helical transmembrane segment spans residues 166–185 (LGSPAAMIGTSVALGHLIGI). The Extracellular portion of the chain corresponds to 186-189 (YFTG). Residues 190–202 (CSMNPARSFGPAV) constitute an intramembrane region (discontinuously helical). The NPA 2 signature appears at 193-195 (NPA). The Extracellular segment spans residues 203–210 (IVGKFAVH). The helical transmembrane segment at 211–231 (WIFWVGPLTGAVLASLIYNFI) threads the bilayer. At 232–276 (LFPDTKTVAQRLAILVGTTKVEKVVDLEPQKKESQTNSEDTEVSV) the chain is on the cytoplasmic side.

The protein belongs to the MIP/aquaporin (TC 1.A.8) family. In terms of assembly, homotetramer; each monomer provides an independent solute pore. N-glycosylated. As to expression, kidney.

The protein resides in the cytoplasmic vesicle membrane. It catalyses the reaction nitrate(in) = nitrate(out). It carries out the reaction iodide(out) = iodide(in). The catalysed reaction is bromide(in) = bromide(out). The enzyme catalyses chloride(in) = chloride(out). It catalyses the reaction Na(+)(in) = Na(+)(out). It carries out the reaction H2O(in) = H2O(out). The catalysed reaction is CO2(out) = CO2(in). The enzyme catalyses NH4(+)(in) = NH4(+)(out). Its activity is regulated as follows. Activated by mercury and pH-gated, anion permeability is observed at pH 5.5 and increases markedly at pH 4.0. Selectivity for chloride increases at low pH. The water channel activity is stimulated by mercury by opposition to other aquaporins. Functionally, aquaporins form homotetrameric transmembrane channels, with each monomer independently mediating water transport across the plasma membrane along its osmotic gradient. Unlike classical aquaporins, AQP6 is an intracellular channel with selective anion permeability, particularly for nitrate, and exhibits very low water permeability. It may also facilitate the transport of gases, such as CO2 and NH4(+), as demonstrated in vitro. The polypeptide is Aquaporin-6 (Rattus norvegicus (Rat)).